The following is a 244-amino-acid chain: Protein DMP9 (244 aa).

Positions Met-1 to Arg-56 are disordered. The segment covering Pro-18–Ser-29 has biased composition (pro residues). Positions Pro-30–Ala-45 are enriched in low complexity. 4 consecutive transmembrane segments (helical) span residues Met-71 to Ile-91, Gly-99 to Phe-119, Leu-173 to Phe-193, and Val-213 to Pro-233.

This sequence belongs to the plant DMP1 protein family. Restricted to flowers and pollen.

Its subcellular location is the endoplasmic reticulum membrane. It localises to the vacuole membrane. Its function is as follows. Involved in membrane remodeling. The polypeptide is Protein DMP9 (Arabidopsis thaliana (Mouse-ear cress)).